We begin with the raw amino-acid sequence, 185 residues long: Adenine phosphoribosyltransferase (185 aa).

This sequence belongs to the purine/pyrimidine phosphoribosyltransferase family. Homodimer.

It is found in the cytoplasm. The enzyme catalyses AMP + diphosphate = 5-phospho-alpha-D-ribose 1-diphosphate + adenine. The protein operates within purine metabolism; AMP biosynthesis via salvage pathway; AMP from adenine: step 1/1. Catalyzes a salvage reaction resulting in the formation of AMP, that is energically less costly than de novo synthesis. In Shewanella denitrificans (strain OS217 / ATCC BAA-1090 / DSM 15013), this protein is Adenine phosphoribosyltransferase.